The chain runs to 156 residues: CASP-like protein 5C1 (156 aa).

At 1-24 (MENRERAGAGAVGSAGSLGLRVEQ) the chain is on the cytoplasmic side. Residues 25 to 45 (AVFSSASLLFMSVGVEFFSYT) form a helical membrane-spanning segment. Ala-46 is a topological domain (extracellular). The chain crosses the membrane as a helical span at residues 47-67 (FCFLVTIMGLVIPWSCTLAMI). The Cytoplasmic portion of the chain corresponds to 68–81 (DVYSILVGCPLRVP). Residues 82 to 102 (GVMVIVVIGDWVLAILSLAAA) form a helical membrane-spanning segment. At 103–132 (SSSAAVIDLLLQFHGSHCSPRFCGRYQLSA) the chain is on the extracellular side. Residues 133–153 (MMAFLSWFLTAASSLFNLWFI) form a helical membrane-spanning segment. At 154 to 156 (ASR) the chain is on the cytoplasmic side.

It belongs to the Casparian strip membrane proteins (CASP) family. Homodimer and heterodimers.

The protein resides in the cell membrane. This Oryza sativa subsp. indica (Rice) protein is CASP-like protein 5C1.